The following is a 373-amino-acid chain: Sensor protein DegM (373 aa).

4 helical membrane-spanning segments follow: residues 27–47 (ILLAFLYGGKRAGWGVAAIAV), 57–77 (LFLLGVVLIVLTALFYALCVN), 91–111 (YASLLVILPATIQTFGTLYLI), and 122–142 (VAGWLYIVFLVVTVVLVTYLF). Residues 170 to 370 (SIAHEVRNPL…KVVLSLPIEK (201 aa)) form the Histidine kinase domain. Histidine 173 is subject to Phosphohistidine; by autocatalysis.

Its subcellular location is the cell membrane. The catalysed reaction is ATP + protein L-histidine = ADP + protein N-phospho-L-histidine.. Functionally, involved in a sensory transduction pathway that enhances the production of minor proteases. The sequence is that of Sensor protein DegM (degM) from Bacillus sp. (strain B21-2).